A 475-amino-acid chain; its full sequence is ATP synthase subunit beta (475 aa).

Residue 152–159 (GGAGVGKT) coordinates ATP.

It belongs to the ATPase alpha/beta chains family. In terms of assembly, F-type ATPases have 2 components, CF(1) - the catalytic core - and CF(0) - the membrane proton channel. CF(1) has five subunits: alpha(3), beta(3), gamma(1), delta(1), epsilon(1). CF(0) has four main subunits: a(1), b(1), b'(1) and c(9-12).

Its subcellular location is the cell inner membrane. It carries out the reaction ATP + H2O + 4 H(+)(in) = ADP + phosphate + 5 H(+)(out). Functionally, produces ATP from ADP in the presence of a proton gradient across the membrane. The catalytic sites are hosted primarily by the beta subunits. This is ATP synthase subunit beta from Cereibacter sphaeroides (strain ATCC 17025 / ATH 2.4.3) (Rhodobacter sphaeroides).